A 151-amino-acid polypeptide reads, in one-letter code: ATP synthase subunit b' (151 aa).

A helical membrane pass occupies residues 18-38 (TLPLMALQVVLLTFILNALFF).

This sequence belongs to the ATPase B chain family. In terms of assembly, F-type ATPases have 2 components, F(1) - the catalytic core - and F(0) - the membrane proton channel. F(1) has five subunits: alpha(3), beta(3), gamma(1), delta(1), epsilon(1). F(0) has four main subunits: a(1), b(1), b'(1) and c(10-14). The alpha and beta chains form an alternating ring which encloses part of the gamma chain. F(1) is attached to F(0) by a central stalk formed by the gamma and epsilon chains, while a peripheral stalk is formed by the delta, b and b' chains.

It localises to the cellular thylakoid membrane. In terms of biological role, f(1)F(0) ATP synthase produces ATP from ADP in the presence of a proton or sodium gradient. F-type ATPases consist of two structural domains, F(1) containing the extramembraneous catalytic core and F(0) containing the membrane proton channel, linked together by a central stalk and a peripheral stalk. During catalysis, ATP synthesis in the catalytic domain of F(1) is coupled via a rotary mechanism of the central stalk subunits to proton translocation. Functionally, component of the F(0) channel, it forms part of the peripheral stalk, linking F(1) to F(0). The b'-subunit is a diverged and duplicated form of b found in plants and photosynthetic bacteria. This is ATP synthase subunit b' from Prochlorococcus marinus (strain MIT 9313).